A 656-amino-acid chain; its full sequence is Pyoverdine export ATP-binding/permease protein PvdT (656 aa).

Residues 6–245 (IDLRAIRKSY…SANPAALQAV (240 aa)) form the ABC transporter domain. 43–50 (GASGSGKS) contacts ATP. Transmembrane regions (helical) follow at residues 284–304 (ALTL…LAVG), 538–558 (IAAI…LMTV), 589–609 (LSVV…AALL), and 619–639 (VPAV…FGFM).

This sequence belongs to the ABC transporter superfamily. Macrolide exporter (TC 3.A.1.122) family. In terms of assembly, part of the tripartite efflux system PvdRT-OpmQ, which is composed of an inner membrane component with both ATPase and permease domains, PvdT, a periplasmic membrane fusion protein, PvdR, and an outer membrane component, OpmQ.

The protein localises to the cell inner membrane. Its function is as follows. Part of the tripartite efflux system PvdRT-OpmQ required for the secretion into the extracellular milieu of the siderophore pyoverdine (PVD), which is involved in iron acquisition. This subunit binds PVD and drives its secretion by hydrolyzing ATP. The system is responsible for export of newly synthesized PVD after the final steps of biosynthesis have taken place in the periplasm. It is also responsible for recycling of PVD after internalization of ferri-PVD into the periplasm by the outer-membrane receptor FpvA and release of iron from PVD, thus making PVD available for new cycles of iron uptake. The sequence is that of Pyoverdine export ATP-binding/permease protein PvdT from Pseudomonas savastanoi pv. phaseolicola (strain 1448A / Race 6) (Pseudomonas syringae pv. phaseolicola (strain 1448A / Race 6)).